Reading from the N-terminus, the 439-residue chain is MSNVVIIADDLTGANATGVLLARKGYKTATFLQLPQDPLENGNRFDVISITTDSRAVAPEEAYRRVAEAARAMLGNKPGLFTKRIDSTLRGNLGPEIDAMLDVLGPDSLAVVVAAFPTSGRITVGGYLLVHSIPLEQTDVARDPKTPVHQTLVADIVAAQSKHSVGFIPLATVLQGSTAVMEALGAQKEAGKRIVVMDAATQKDLDTIAHGAYLSGLSVVAVDPGPFTEALAAYVLPKPKQGRGKKVLMVVGSVTALTRQQLKAVENAYSTCFTTVDVHALIDPWRNAEEIERVSGEVLDHLDDHQVLGVRTVEEAGQVLDLASVALAYMISEEEIASRIADGLAAIARRVLQVSHGEVGGLYTSGGDVTVAVCQALAASGVEVKDEVVPLAAYGRLIGGAFHQTPIITKGGLVGNSDAACTCVDYLLTKISNETYPAE.

Residues Ser-253, 366-369, and Gly-412 contribute to the ATP site; that span reads GGDV.

Belongs to the four-carbon acid sugar kinase family.

It carries out the reaction D-erythronate + ATP = 4-phospho-D-erythronate + ADP + H(+). Catalyzes the ATP-dependent phosphorylation of D-erythronate to D-erythronate 4-phosphate. Can also phosphorylate D-threonate and 4-hydroxy-L-threonine, with lower efficiency. In Heliobacterium modesticaldum (strain ATCC 51547 / Ice1), this protein is D-erythronate kinase.